We begin with the raw amino-acid sequence, 217 residues long: Octanoyltransferase (217 aa).

The BPL/LPL catalytic domain occupies 33-208 (SSSQDEIWLV…KLCSLLGIAS (176 aa)). Substrate contacts are provided by residues 72-79 (RGGQVTYH), 139-141 (SIG), and 152-154 (GLA). Cys-170 acts as the Acyl-thioester intermediate in catalysis.

Belongs to the LipB family.

The protein resides in the cytoplasm. It catalyses the reaction octanoyl-[ACP] + L-lysyl-[protein] = N(6)-octanoyl-L-lysyl-[protein] + holo-[ACP] + H(+). Its pathway is protein modification; protein lipoylation via endogenous pathway; protein N(6)-(lipoyl)lysine from octanoyl-[acyl-carrier-protein]: step 1/2. Catalyzes the transfer of endogenously produced octanoic acid from octanoyl-acyl-carrier-protein onto the lipoyl domains of lipoate-dependent enzymes. Lipoyl-ACP can also act as a substrate although octanoyl-ACP is likely to be the physiological substrate. The protein is Octanoyltransferase of Pseudoalteromonas atlantica (strain T6c / ATCC BAA-1087).